A 255-amino-acid polypeptide reads, in one-letter code: EEF1A lysine methyltransferase 4 (255 aa).

S-adenosyl-L-methionine-binding residues include tryptophan 26 and tyrosine 30. Residue tyrosine 39 is modified to Phosphotyrosine. S-adenosyl-L-methionine contacts are provided by residues tryptophan 41, glycine 66, 88–89 (DY), 113–114 (DV), and lysine 130. The short motif at 129–134 (EKGTLD) is the Required for methyltransferase activity element.

Belongs to the methyltransferase superfamily.

The catalysed reaction is L-lysyl-[protein] + S-adenosyl-L-methionine = N(6)-methyl-L-lysyl-[protein] + S-adenosyl-L-homocysteine + H(+). It carries out the reaction N(6)-methyl-L-lysyl-[protein] + S-adenosyl-L-methionine = N(6),N(6)-dimethyl-L-lysyl-[protein] + S-adenosyl-L-homocysteine + H(+). The enzyme catalyses N(6),N(6)-dimethyl-L-lysyl-[protein] + S-adenosyl-L-methionine = N(6),N(6),N(6)-trimethyl-L-lysyl-[protein] + S-adenosyl-L-homocysteine + H(+). Functionally, protein-lysine methyltransferase that efficiently catalyzes three successive methylations on 'Lys-36' in eukaryotic translation elongation factor 1 alpha (EEF1A1 or EEF1A2). This is EEF1A lysine methyltransferase 4 from Mus musculus (Mouse).